The following is a 999-amino-acid chain: Signal peptide, CUB and EGF-like domain-containing protein 2 (999 aa).

The first 31 residues, 1-31 (MGVAGRNRPGAAWAVLLLLLLLPPLLLLAGA), serve as a signal peptide directing secretion. The EGF-like 1; calcium-binding domain maps to 45–85 (DVDECAQGLDDCHADALCQNTPTSYKCSCKPGYQGEGRQCE). 6 disulfides stabilise this stretch: C49–C62, C56–C71, C73–C84, C90–C102, C98–C111, and C113–C126. The EGF-like 2; calcium-binding domain maps to 86–127 (DIDECGNELNGGCVHDCLNIPGNYRCTCFDGFMLAHDGHNCL). The 41-residue stretch at 128–168 (DVDECLENNGGCQHTCVNVMGSYECCCKEGFFLSDNQHTCI) folds into the EGF-like 3; calcium-binding domain. EGF-like domains follow at residues 177-213 (CMNK…QRDC), 217-252 (CNHG…GRSC), and 286-321 (CAVN…GKTC). One can recognise an EGF-like 7; calcium-binding domain in the interval 323–363 (DIDECQTRNGGCDHFCKNIVGSFDCGCKKGFKLLTDEKSCQ). The EGF-like 8; calcium-binding domain maps to 364-402 (DVDECSLDRTCDHSCINHPGTFACACNRGYTLYGFTHCG). Intrachain disulfides connect C368-C378, C374-C387, C389-C401, C407-C418, C414-C427, and C429-C442. The EGF-like 9; calcium-binding domain occupies 403 to 443 (DTNECSINNGGCQQVCVNTVGSYECQCHPGYKLHWNKKDCV). An N-linked (GlcNAc...) asparagine glycan is attached at N659. An intrachain disulfide couples C809 to C835. Residues 809 to 921 (CGGELGDFTG…RGFQVPYVTY (113 aa)) enclose the CUB domain. An interaction with the cholesterol-anchor of SHH region spans residues 847-856 (ILIVVPEIFL). C862 and C883 form a disulfide bridge.

Forms homooligomers. Forms heterooligomers with SCUBE1. Forms heterooligomers with SCUBE3. Interacts with SHH via the cholesterol anchor of the dually lipid-modified SHH (ShhNp). Interacts with PTCH1. Interacts with VEGFR2. Post-translationally, N-glycosylated. Expressed in a broad spectrum of adult tissues.

The protein resides in the secreted. The protein localises to the cell surface. In terms of biological role, lipid-binding protein required for SHH long-range signaling by binding to the dually lipid-modified SHH (ShhNp) and by promoting ShhNp mobilization, solubilization and release from the cell membrane. Acts by enhancing the proteolytic processing (shedding) of the lipid-modified N- and C- terminal of ShhNp at the cell surface. Synergizes with DISP1 to increase SHH secretion. Probable cell surface coreceptor for VEGFR2 involved in VEGFR2-mediated angiogenesis. This Homo sapiens (Human) protein is Signal peptide, CUB and EGF-like domain-containing protein 2.